The primary structure comprises 2208 residues: RNA-directed RNA polymerase L (2208 aa).

The tract at residues Lys26–Cys284 is endonuclease. 3 residues coordinate Mn(2+): Glu51, Asp89, and Glu102. Lys115 is an active-site residue. The RdRp catalytic domain occupies Cys1171–Val1367. Residue Asp1329 coordinates Mg(2+).

It belongs to the Bunyavirales RNA polymerase family. Homomultimer; the oligomeric structure is essential for the polymerase activity. Interacts with nucleoprotein N. Interacts with protein Z; this interaction inhibits viral transcription and replication, Z partially blocks the product exit tunnel for the releasing nascent RNA product. Mn(2+) serves as cofactor. Requires Mg(2+) as cofactor.

The protein localises to the virion. The protein resides in the host cytoplasm. It carries out the reaction RNA(n) + a ribonucleoside 5'-triphosphate = RNA(n+1) + diphosphate. Its function is as follows. RNA-dependent RNA polymerase, which is responsible for the replication and transcription of the viral RNA genome using antigenomic RNA as an intermediate. During transcription, synthesizes subgenomic RNAs and assures their capping by a cap-snatching mechanism, which involves the endonuclease activity cleaving the host capped pre-mRNAs. These short capped RNAs are then used as primers for viral transcription. The 3'-end of subgenomic mRNAs molecules are heterogeneous and not polyadenylated. The replicase function is to direct synthesis of antigenomic and genomic RNA which are encapsidated and non capped. As a consequence of the use of the same enzyme for both transcription and replication, these mechanisms need to be well coordinated. These processes may be regulated by proteins N and Z in a dose-dependent manner. Z protein inhibits the viral polymerase L und thus the viral transcription and RNA synthesis. The polypeptide is RNA-directed RNA polymerase L (Homo sapiens (Human)).